We begin with the raw amino-acid sequence, 1401 residues long: DNA-directed RNA polymerase subunit beta' (1401 aa).

Zn(2+) is bound by residues Cys-70, Cys-72, Cys-85, and Cys-88. Positions 460, 462, and 464 each coordinate Mg(2+). Zn(2+) contacts are provided by Cys-814, Cys-888, Cys-895, and Cys-898. The segment at 1369 to 1388 (RQKQKAVEQEGPSAEQATDN) is disordered.

It belongs to the RNA polymerase beta' chain family. The RNAP catalytic core consists of 2 alpha, 1 beta, 1 beta' and 1 omega subunit. When a sigma factor is associated with the core the holoenzyme is formed, which can initiate transcription. Requires Mg(2+) as cofactor. Zn(2+) serves as cofactor.

The enzyme catalyses RNA(n) + a ribonucleoside 5'-triphosphate = RNA(n+1) + diphosphate. In terms of biological role, DNA-dependent RNA polymerase catalyzes the transcription of DNA into RNA using the four ribonucleoside triphosphates as substrates. The chain is DNA-directed RNA polymerase subunit beta' from Aliivibrio fischeri (strain ATCC 700601 / ES114) (Vibrio fischeri).